Consider the following 138-residue polypeptide: Putative nickel-responsive regulator (138 aa).

Ni(2+)-binding residues include histidine 76, histidine 87, histidine 89, and cysteine 95.

It belongs to the transcriptional regulatory CopG/NikR family. The cofactor is Ni(2+).

Its function is as follows. Transcriptional regulator. The polypeptide is Putative nickel-responsive regulator (Pseudomonas putida (strain ATCC 47054 / DSM 6125 / CFBP 8728 / NCIMB 11950 / KT2440)).